Here is a 1407-residue protein sequence, read N- to C-terminus: ABC transporter B family member 6 (1407 aa).

The segment at 18-65 is disordered; sequence LTPVSEVSEPPESPSPYLDPGAEHGGTGTAAQADDEEEMEEPEEMEPP. Over residues 50 to 63 the composition is skewed to acidic residues; the sequence is ADDEEEMEEPEEME. Transmembrane regions (helical) follow at residues 84–104, 139–159, 212–231, and 236–258; these read VLMVFGSVAAAAHGTALIVYL, IVYIAGGVFISGWIEVSCWIL, VGNYIHNMATFISGLIIGFV, and IALITLATGPFIVAAGGISNIFL. The 294-residue stretch at 86 to 379 folds into the ABC transmembrane type-1 1 domain; the sequence is MVFGSVAAAA…AATNFYSFDQ (294 aa). Asparagine 291 carries an N-linked (GlcNAc...) asparagine glycan. 2 helical membrane passes run 310–330 and 351–371; these read GILISLVQGLGLGFTYGLAIC and GEIITALFAVILSGLGLNQAA. The ABC transporter 1 domain maps to 412–647; that stretch reads IEFRNVYFSY…GNLYAELLKC (236 aa). 447 to 454 is a binding site for ATP; it reads GRNGSGKS. N-linked (GlcNAc...) asparagine glycosylation is found at asparagine 449 and asparagine 663. Disordered stretches follow at residues 670 to 696 and 709 to 815; these read AERDSSAGRGFQEPSSPKMAKSPSLQR and NSEE…DGQH. The N-linked (GlcNAc...) asparagine glycan is linked to asparagine 727. The segment covering 733-755 has biased composition (basic and acidic residues); that stretch reads VGEKEPTIKRQDSFEMRLPELPK. The segment covering 761–770 has biased composition (polar residues); the sequence is PQRQKSNGSD. Asparagine 767 is a glycosylation site (N-linked (GlcNAc...) asparagine). Positions 835–1123 constitute an ABC transmembrane type-1 2 domain; sequence AVLGSIGAAI…PFGLAPYILK (289 aa). The next 6 membrane-spanning stretches (helical) occupy residues 840–860, 880–900, 958–978, 982–1002, 1061–1081, and 1102–1122; these read IGAAIFGSFNPLLAYVIALVV, LIIACMGIVTVVANFLQHFYF, IFIQDSFAVIVAILIGLLLGW, LVALATLPVLTLSAIAQKLWL, IGFAFGFSQFLLFACNALLLW, and MVFSFATFALVEPFGLAPYIL. The 238-residue stretch at 1158 to 1395 folds into the ABC transporter 2 domain; that stretch reads IELKNIDFCY…NGLYVRLMQP (238 aa). An N-linked (GlcNAc...) asparagine glycan is attached at asparagine 1178. Residue 1193-1200 participates in ATP binding; sequence GVSGSGKS. N-linked (GlcNAc...) asparagine glycosylation is found at asparagine 1260 and asparagine 1346.

This sequence belongs to the ABC transporter superfamily. ABCB family. Multidrug resistance exporter (TC 3.A.1.201) subfamily. Expressed in aerial tissues.

Its subcellular location is the membrane. The enzyme catalyses (indol-3-yl)acetate(in) + ATP + H2O = (indol-3-yl)acetate(out) + ADP + phosphate + H(+). In terms of biological role, probable auxin efflux transporter that contributes, together with ABCB20 and in a FKBP42/TWD1-dependent manner, to the regulation of leaf position and morphology, internode distribution, roots development, and inflorescence organization, probably by modulating auxin repartition. The chain is ABC transporter B family member 6 from Arabidopsis thaliana (Mouse-ear cress).